Here is a 513-residue protein sequence, read N- to C-terminus: ATP synthase subunit alpha (513 aa).

Residue 169–176 participates in ATP binding; that stretch reads GDRQTGKT.

It belongs to the ATPase alpha/beta chains family. As to quaternary structure, F-type ATPases have 2 components, CF(1) - the catalytic core - and CF(0) - the membrane proton channel. CF(1) has five subunits: alpha(3), beta(3), gamma(1), delta(1), epsilon(1). CF(0) has three main subunits: a(1), b(2) and c(9-12). The alpha and beta chains form an alternating ring which encloses part of the gamma chain. CF(1) is attached to CF(0) by a central stalk formed by the gamma and epsilon chains, while a peripheral stalk is formed by the delta and b chains.

It localises to the cell inner membrane. It carries out the reaction ATP + H2O + 4 H(+)(in) = ADP + phosphate + 5 H(+)(out). Functionally, produces ATP from ADP in the presence of a proton gradient across the membrane. The alpha chain is a regulatory subunit. This chain is ATP synthase subunit alpha, found in Glaesserella parasuis serovar 5 (strain SH0165) (Haemophilus parasuis).